Reading from the N-terminus, the 196-residue chain is Large ribosomal subunit protein bL25 (196 aa).

Belongs to the bacterial ribosomal protein bL25 family. CTC subfamily. Part of the 50S ribosomal subunit; part of the 5S rRNA/L5/L18/L25 subcomplex. Contacts the 5S rRNA. Binds to the 5S rRNA independently of L5 and L18.

This is one of the proteins that binds to the 5S RNA in the ribosome where it forms part of the central protuberance. This is Large ribosomal subunit protein bL25 from Amoebophilus asiaticus (strain 5a2).